We begin with the raw amino-acid sequence, 219 residues long: Ribosome hibernation promotion factor (219 aa).

This sequence belongs to the HPF/YfiA ribosome-associated protein family. Long HPF subfamily. As to quaternary structure, interacts with 100S ribosomes.

It localises to the cytoplasm. Its function is as follows. Required for dimerization of active 70S ribosomes into 100S ribosomes in stationary phase; 100S ribosomes are translationally inactive and sometimes present during exponential growth. The sequence is that of Ribosome hibernation promotion factor from Mycobacterium tuberculosis (strain ATCC 25618 / H37Rv).